Consider the following 185-residue polypeptide: Ribosome-recycling factor (185 aa).

Residues 143-163 (EKEKLISEDDNKKGMDDIQKE) are disordered.

Belongs to the RRF family.

The protein localises to the cytoplasm. In terms of biological role, responsible for the release of ribosomes from messenger RNA at the termination of protein biosynthesis. May increase the efficiency of translation by recycling ribosomes from one round of translation to another. In Syntrophomonas wolfei subsp. wolfei (strain DSM 2245B / Goettingen), this protein is Ribosome-recycling factor.